A 201-amino-acid polypeptide reads, in one-letter code: Cell division protein SepF (201 aa).

Basic and acidic residues predominate over residues 27–38; it reads VQERTSVQRDSR. The disordered stretch occupies residues 27–99; sequence VQERTSVQRD…PRVQNKDSVR (73 aa). Polar residues predominate over residues 43 to 54; sequence QEASQRSHMTNS. Residues 72-81 show a composition bias toward basic and acidic residues; it reads NRQERQRVQR. Residues 83–92 are compositionally biased toward polar residues; sequence NAYQQATPRV.

This sequence belongs to the SepF family. In terms of assembly, homodimer. Interacts with FtsZ.

It localises to the cytoplasm. Its function is as follows. Cell division protein that is part of the divisome complex and is recruited early to the Z-ring. Probably stimulates Z-ring formation, perhaps through the cross-linking of FtsZ protofilaments. Its function overlaps with FtsA. The chain is Cell division protein SepF from Streptococcus agalactiae serotype V (strain ATCC BAA-611 / 2603 V/R).